Here is a 261-residue protein sequence, read N- to C-terminus: Small ribosomal subunit protein eS4 (261 aa).

In terms of domain architecture, S4 RNA-binding spans 42-104; sequence LPLVIFLRNR…TGEFFRLIYD (63 aa).

Belongs to the eukaryotic ribosomal protein eS4 family.

The protein is Small ribosomal subunit protein eS4 (RpS4) of Carabus granulatus (Ground beetle).